Consider the following 277-residue polypeptide: NADPH-dependent 7-cyano-7-deazaguanine reductase (277 aa).

Position 86 to 88 (86 to 88 (IES)) interacts with substrate. 88-89 (SK) serves as a coordination point for NADPH. The Thioimide intermediate role is filled by cysteine 184. The active-site Proton donor is the aspartate 191. Residue 223–224 (HE) participates in substrate binding. 252–253 (RG) provides a ligand contact to NADPH.

Belongs to the GTP cyclohydrolase I family. QueF type 2 subfamily. Homodimer.

It localises to the cytoplasm. The catalysed reaction is 7-aminomethyl-7-carbaguanine + 2 NADP(+) = 7-cyano-7-deazaguanine + 2 NADPH + 3 H(+). The protein operates within tRNA modification; tRNA-queuosine biosynthesis. Catalyzes the NADPH-dependent reduction of 7-cyano-7-deazaguanine (preQ0) to 7-aminomethyl-7-deazaguanine (preQ1). In Chromohalobacter salexigens (strain ATCC BAA-138 / DSM 3043 / CIP 106854 / NCIMB 13768 / 1H11), this protein is NADPH-dependent 7-cyano-7-deazaguanine reductase.